A 260-amino-acid chain; its full sequence is Fructose import ATP-binding protein FrcA (260 aa).

The ABC transporter domain occupies 7–251 (LTARGLVKRY…DAVAFMTGAK (245 aa)). 39-46 (GDNGAGKS) provides a ligand contact to ATP.

This sequence belongs to the ABC transporter superfamily. In terms of assembly, the complex is composed of two ATP-binding proteins (FrcA), two transmembrane proteins (FrcC) and a solute-binding protein (FrcB).

It localises to the cell inner membrane. It carries out the reaction D-fructose(out) + ATP + H2O = D-fructose(in) + ADP + phosphate + H(+). Part of the high-affinity ABC transporter complex FrcBCA involved in fructose uptake. Is also a high-affinity transporter for ribose and mannose. Responsible for energy coupling to the transport system. The protein is Fructose import ATP-binding protein FrcA of Rhizobium meliloti (Ensifer meliloti).